The chain runs to 80 residues: Pigment-dispersing hormone type 2 (80 aa).

The N-terminal stretch at 1 to 23 is a signal peptide; sequence MARCFVVLAFLALAAMSLQVATA. An Alanine amide modification is found at A77.

It belongs to the arthropod PDH family. In terms of tissue distribution, eyestalk.

The protein localises to the secreted. Functionally, the pigment-dispersing hormone causes the migration of the distal retinal pigment into the proximal end of the pigment chromatophore cells and thus decreases the amount of light entering the retinulas. May also function as a neurotransmitter and/or neuromodulator. The chain is Pigment-dispersing hormone type 2 (PDH2) from Penaeus vannamei (Whiteleg shrimp).